The chain runs to 1044 residues: Eukaryotic translation initiation factor 3 subunit A (1044 aa).

The stretch at 92–121 (LKKFIELAEKKVTEAQAKADEIQSSLESAA) forms a coiled coil. One can recognise a PCI domain in the interval 339-523 (MTKAASFVLL…GVLTFDTDIF (185 aa)). Residues 611 to 907 (IDKKKEAATD…EARRAARKAG (297 aa)) adopt a coiled-coil conformation. A compositionally biased stretch (basic and acidic residues) spans 797–901 (SEKRHEEFEK…QREEEAEARR (105 aa)). The tract at residues 797-1044 (SEKRHEEFEK…WVPRWKQQQS (248 aa)) is disordered. 2 stretches are compositionally biased toward low complexity: residues 943-956 (KEAAGGAAPAAAPA) and 1006-1017 (SSSSQPPSRTQT).

The protein belongs to the eIF-3 subunit A family. In terms of assembly, component of the eukaryotic translation initiation factor 3 (eIF-3) complex.

The protein resides in the cytoplasm. Its function is as follows. RNA-binding component of the eukaryotic translation initiation factor 3 (eIF-3) complex, which is involved in protein synthesis of a specialized repertoire of mRNAs and, together with other initiation factors, stimulates binding of mRNA and methionyl-tRNAi to the 40S ribosome. The eIF-3 complex specifically targets and initiates translation of a subset of mRNAs involved in cell proliferation. The chain is Eukaryotic translation initiation factor 3 subunit A (tif32) from Aspergillus clavatus (strain ATCC 1007 / CBS 513.65 / DSM 816 / NCTC 3887 / NRRL 1 / QM 1276 / 107).